Here is a 336-residue protein sequence, read N- to C-terminus: DNA-directed RNA polymerase subunit alpha (336 aa).

Residues 1–233 are alpha N-terminal domain (alpha-NTD); the sequence is MSSNSFLTPR…EQFSFFADLE (233 aa). An alpha C-terminal domain (alpha-CTD) region spans residues 247–336; it reads IDPILLRPVD…YIKEPGHASS (90 aa).

Belongs to the RNA polymerase alpha chain family. In terms of assembly, homodimer. The RNAP catalytic core consists of 2 alpha, 1 beta, 1 beta' and 1 omega subunit. When a sigma factor is associated with the core the holoenzyme is formed, which can initiate transcription.

The enzyme catalyses RNA(n) + a ribonucleoside 5'-triphosphate = RNA(n+1) + diphosphate. Functionally, DNA-dependent RNA polymerase catalyzes the transcription of DNA into RNA using the four ribonucleoside triphosphates as substrates. The chain is DNA-directed RNA polymerase subunit alpha from Nitrosomonas europaea (strain ATCC 19718 / CIP 103999 / KCTC 2705 / NBRC 14298).